We begin with the raw amino-acid sequence, 172 residues long: Neuropeptide-like protein nlp-8 (172 aa).

An N-terminal signal peptide occupies residues 1 to 26 (MSQKLLPISPLQLLFLQCLLIGFTAA).

In terms of processing, may be processed by convertase egl-3.

The protein localises to the secreted. Neuropeptide-like protein. Plays a role in behaviors associated with a sleep-like state induced by stress (SIS), acting in concert with the FARP (FMRFamide related) peptides, flp-13 and flp-24. The chain is Neuropeptide-like protein nlp-8 from Caenorhabditis elegans.